The chain runs to 662 residues: MINHITDNQFKLVSKYQPSGDQPQAIEQLVDNIEGGEKAQILMGATGTGKTYTMSQVISKVNKPTLVIAHNKTLAGQLYGEFKEFFPENAVEYFVSYYDYYQPEAYVPSSDTYIEKDSSVNDEIDKLRHSATSALLERNDVIVVASVSCIYGLGSPKEYADSVVSLRPGLEISRDKLLNDLVDIQFERNDIDFQRGRFRVRGDVVEIFPASRDEHAFRVEFFGDEIDRIREVEALTGQVLGEVDHLAIFPATHFVTNDDHMEVAIAKIQAELEEQLAVFEKEGKLLEAQRLKQRTEYDIEMLREMGYTNGVENYSRHMDGRSEGEPPYTLLDFFPDDFLIMIDESHMTIGQIKGMYNGDRSRKEMLVNYGFRLPSALDNRPLRREEFESHVHQIVYVSATPGDYENEQTETVIEQIIRPTGLLDPEVEVRPTMGQIDDLLGEINARVEKNERTFITTLTKKMAEDLTDYFKEMGIKVKYMHSDIKTLERTEIIRDLRLGVFDVLVGINLLREGIDVPEVSLVAILDADKEGFLRNERGLIQTIGRAARNSEGHVIMYADTVTQSMQRAIDETARRRKIQMAYNEEHGIVPQTIKKEIRDLIAVTKAVAKEEDKEVDITSLNKQERKELVKKLEKQMQEAVEVLDFELAAQIRDMMLEVKALD.

Positions 31-188 (DNIEGGEKAQ…NDLVDIQFER (158 aa)) constitute a Helicase ATP-binding domain. 44-51 (GATGTGKT) lines the ATP pocket. The Beta-hairpin signature appears at 97–120 (YYDYYQPEAYVPSSDTYIEKDSSV). A Helicase C-terminal domain is found at 435–601 (QIDDLLGEIN…TIKKEIRDLI (167 aa)). Positions 626–661 (KELVKKLEKQMQEAVEVLDFELAAQIRDMMLEVKAL) constitute a UVR domain.

It belongs to the UvrB family. As to quaternary structure, forms a heterotetramer with UvrA during the search for lesions. Interacts with UvrC in an incision complex.

Its subcellular location is the cytoplasm. The UvrABC repair system catalyzes the recognition and processing of DNA lesions. A damage recognition complex composed of 2 UvrA and 2 UvrB subunits scans DNA for abnormalities. Upon binding of the UvrA(2)B(2) complex to a putative damaged site, the DNA wraps around one UvrB monomer. DNA wrap is dependent on ATP binding by UvrB and probably causes local melting of the DNA helix, facilitating insertion of UvrB beta-hairpin between the DNA strands. Then UvrB probes one DNA strand for the presence of a lesion. If a lesion is found the UvrA subunits dissociate and the UvrB-DNA preincision complex is formed. This complex is subsequently bound by UvrC and the second UvrB is released. If no lesion is found, the DNA wraps around the other UvrB subunit that will check the other stand for damage. The protein is UvrABC system protein B of Streptococcus pneumoniae (strain Hungary19A-6).